The chain runs to 130 residues: UPF0102 protein SCO5602 (130 aa).

Belongs to the UPF0102 family.

The sequence is that of UPF0102 protein SCO5602 from Streptomyces coelicolor (strain ATCC BAA-471 / A3(2) / M145).